We begin with the raw amino-acid sequence, 398 residues long: Succinate--CoA ligase [ADP-forming] subunit beta (398 aa).

An ATP-grasp domain is found at 9–250 (KQLFARYGVP…VDEEDPVELQ (242 aa)). Residues Lys50, 57–59 (GRG), Glu104, Leu107, and Glu112 contribute to the ATP site. Positions 205 and 219 each coordinate Mg(2+). Substrate contacts are provided by residues Asn270 and 327–329 (GIM).

The protein belongs to the succinate/malate CoA ligase beta subunit family. As to quaternary structure, heterotetramer of two alpha and two beta subunits. The cofactor is Mg(2+).

It carries out the reaction succinate + ATP + CoA = succinyl-CoA + ADP + phosphate. It catalyses the reaction GTP + succinate + CoA = succinyl-CoA + GDP + phosphate. It functions in the pathway carbohydrate metabolism; tricarboxylic acid cycle; succinate from succinyl-CoA (ligase route): step 1/1. Its function is as follows. Succinyl-CoA synthetase functions in the citric acid cycle (TCA), coupling the hydrolysis of succinyl-CoA to the synthesis of either ATP or GTP and thus represents the only step of substrate-level phosphorylation in the TCA. The beta subunit provides nucleotide specificity of the enzyme and binds the substrate succinate, while the binding sites for coenzyme A and phosphate are found in the alpha subunit. This chain is Succinate--CoA ligase [ADP-forming] subunit beta, found in Sorangium cellulosum (strain So ce56) (Polyangium cellulosum (strain So ce56)).